A 427-amino-acid polypeptide reads, in one-letter code: Glutamate-1-semialdehyde 2,1-aminomutase (427 aa).

Position 264 is an N6-(pyridoxal phosphate)lysine (Lys-264).

The protein belongs to the class-III pyridoxal-phosphate-dependent aminotransferase family. HemL subfamily. Homodimer. It depends on pyridoxal 5'-phosphate as a cofactor.

It localises to the cytoplasm. The enzyme catalyses (S)-4-amino-5-oxopentanoate = 5-aminolevulinate. It participates in porphyrin-containing compound metabolism; protoporphyrin-IX biosynthesis; 5-aminolevulinate from L-glutamyl-tRNA(Glu): step 2/2. This Campylobacter concisus (strain 13826) protein is Glutamate-1-semialdehyde 2,1-aminomutase.